Reading from the N-terminus, the 422-residue chain is Vitamin D3 receptor B (422 aa).

A DNA-binding region (nuclear receptor) is located at residues 20–95 (PRICGVCGDK…IGMMKEFILT (76 aa)). C23, C26, C40, C43, C59, C65, C75, and C78 together coordinate Zn(2+). 2 consecutive NR C4-type zinc fingers follow at residues 23–43 (CGVCGDKATGFHFNAMTCEGC) and 59–78 (CPFNGSCTITKDNRRHCQAC). Positions 96-125 (DEEVQRKKELIQRRKDEEAHREAQKPRLSD) are hinge. Residues 106-128 (IQRRKDEEAHREAQKPRLSDEQR) form a disordered region. An NR LBD domain is found at 126-418 (EQRNIIDTLV…LTPLVLEVFG (293 aa)). Y142 is a binding site for calcitriol. The tract at residues 145–190 (SYSDFSRFRPPVREGPVTRSASRAASLHSLSDASSDSFSHSPESGD) is disordered. Residues 163–185 (RSASRAASLHSLSDASSDSFSHS) are compositionally biased toward low complexity. S234 is a calcitriol binding site. The interaction with coactivator LXXLL motif stretch occupies residues 243-261 (KMIPGFRELTAEDQIALLK). Calcitriol-binding residues include R271, S275, H302, and H392. Residues 411–419 (PLVLEVFGG) carry the 9aaTAD motif.

It belongs to the nuclear hormone receptor family. As to quaternary structure, homodimer in the absence of bound vitamin D3. Heterodimer with RXRA after vitamin D3 binding. Interacts with ncoa1 and possibly other coactivators, leading to a strong increase of transcription of target genes. Detected in embryo 24 to 48 hours after fertilization, and in intestinal bulb.

It is found in the nucleus. It localises to the cytoplasm. Functionally, nuclear receptor for calcitriol, the active form of vitamin D3 which mediates the action of this vitamin on cells. Enters the nucleus upon vitamin D3 binding where it forms heterodimers with the retinoid X receptor/RXR. The VDR-RXR heterodimers bind to specific response elements on DNA and activate the transcription of vitamin D3-responsive target genes. Recruited to promoters via its interaction with BAZ1B/WSTF which mediates the interaction with acetylated histones, an essential step for VDR-promoter association. Plays a central role in calcium homeostasis. This chain is Vitamin D3 receptor B (vdrb), found in Danio rerio (Zebrafish).